A 223-amino-acid chain; its full sequence is Neurotrophic factor BDNF precursor form (223 aa).

The signal sequence occupies residues 1–5 (SCMKA). A propeptide spanning residues 6–114 (APMKEVSIRG…AANMSMRVRR (109 aa)) is cleaved from the precursor. The N-linked (GlcNAc...) asparagine glycan is linked to asparagine 107. 2 disulfide bridges follow: cysteine 127/cysteine 194 and cysteine 172/cysteine 223.

This sequence belongs to the NGF-beta family.

It is found in the secreted. Promotes the survival of neuronal populations that are all located either in the central nervous system or directly connected to it. This chain is Neurotrophic factor BDNF precursor form (BDNF), found in Chilabothrus striatus (Haitian boa constrictor).